A 961-amino-acid polypeptide reads, in one-letter code: Phosphofurin acidic cluster sorting protein 1 (961 aa).

The segment covering methionine 1–serine 19 has biased composition (gly residues). Disordered regions lie at residues methionine 1–threonine 70 and valine 76–alanine 95. Alanine 2 is modified (N-acetylalanine). The segment covering glutamine 20 to glutamine 34 has biased composition (low complexity). A Phosphoserine modification is found at serine 28. The span at glutamine 35–proline 46 shows a compositional bias: pro residues. Threonine 44 carries the post-translational modification Phosphothreonine. Over residues alanine 51–threonine 70 the composition is skewed to low complexity. Tyrosine 249 carries the phosphotyrosine modification. Positions glycine 260 to aspartate 271 are enriched in basic and acidic residues. Disordered regions lie at residues glycine 260–glutamine 297 and asparagine 375–threonine 426. The span at asparagine 274–aspartate 291 shows a compositional bias: acidic residues. Residues histidine 351–asparagine 375 adopt a coiled-coil conformation. Phosphoserine occurs at positions 377 and 379. Over residues methionine 404–threonine 426 the composition is skewed to polar residues. Phosphoserine occurs at positions 428 and 493. Disordered stretches follow at residues glutamate 475–glutamine 540 and serine 758–serine 802. Threonine 502 is modified (phosphothreonine). Residues serine 517, serine 526, serine 527, serine 529, and serine 532 each carry the phosphoserine modification. A compositionally biased stretch (low complexity) spans serine 768–serine 802.

Belongs to the PACS family. In terms of assembly, associates with AP-1 and AP-3 but not with AP-2 complexes. Interacts with FURIN. Forms a ternary complex with FURIN and AP-1. Interacts with PKD2 (via acidic region). Interacts with SORL1. Interacts with WDR37.

The protein resides in the golgi apparatus. It is found in the trans-Golgi network. Its function is as follows. Coat protein that is involved in the localization of trans-Golgi network (TGN) membrane proteins that contain acidic cluster sorting motifs. Controls the endosome-to-Golgi trafficking of furin and mannose-6-phosphate receptor by connecting the acidic-cluster-containing cytoplasmic domain of these molecules with the adapter-protein complex-1 (AP-1) of endosomal clathrin-coated membrane pits. Required for normal ER Ca2+ handling in lymphocytes. Together with WDR37, it plays an essential role in lymphocyte development, quiescence and survival. Required for stabilizing peripheral lymphocyte populations. This chain is Phosphofurin acidic cluster sorting protein 1 (Pacs1), found in Mus musculus (Mouse).